A 607-amino-acid polypeptide reads, in one-letter code: Albumin B (607 aa).

Residues 1–18 (MKWITLICLLISSSFIES) form the signal peptide. Residues 19–24 (RILFKR) constitute a propeptide that is removed on maturation. 3 Albumin domains span residues 22–209 (FKRD…KQLM), 210–402 (KQSH…RFMN), and 403–600 (EAKE…VLIE). Position 30 (His30) interacts with Cu cation. Cystine bridges form between Cys80–Cys88, Cys101–Cys117, Cys116–Cys127, Cys147–Cys192, Cys191–Cys200, Cys223–Cys269, Cys268–Cys276, Cys288–Cys302, Cys301–Cys312, Cys339–Cys384, Cys383–Cys392, Cys415–Cys461, Cys460–Cys471, Cys484–Cys500, Cys499–Cys510, Cys537–Cys582, and Cys581–Cys590.

It belongs to the ALB/AFP/VDB family. In terms of tissue distribution, plasma.

It localises to the secreted. In terms of biological role, serum albumin, the main protein of plasma, has a good binding capacity for water, Ca(2+), Na(+), K(+), fatty acids, hormones, bilirubin and drugs. Its main function is the regulation of the colloidal osmotic pressure of blood. The chain is Albumin B (alb-b) from Xenopus laevis (African clawed frog).